The sequence spans 356 residues: Fructose import permease protein FruF (356 aa).

7 helical membrane passes run 25 to 45, 77 to 97, 113 to 133, 180 to 200, 231 to 251, 268 to 290, and 308 to 328; these read IVAF…FLAL, LVIS…VAGA, ILIA…LVSF, FILG…LVGL, ILFL…LFAT, MYAI…SLAG, and LGVN…VICV.

This sequence belongs to the binding-protein-dependent transport system permease family. As to quaternary structure, the complex is composed of an ATP-binding protein (FruK), two transmembrane proteins (FruF and FruG) and a solute-binding protein (FruE).

Its subcellular location is the cell membrane. Part of the high-affinity ABC transporter complex FruEKFG involved in fructose uptake. Can also transport ribose and xylose, with lower affinity. Probably responsible for the translocation of the substrate across the membrane. The protein is Fructose import permease protein FruF of Bifidobacterium longum (strain NCC 2705).